Reading from the N-terminus, the 296-residue chain is Nucleotide-binding protein SPCG_1551 (296 aa).

13-20 (GMSGAGKT) contributes to the ATP binding site. GTP is bound at residue 63-66 (DMRS).

Belongs to the RapZ-like family.

Its function is as follows. Displays ATPase and GTPase activities. The protein is Nucleotide-binding protein SPCG_1551 of Streptococcus pneumoniae (strain CGSP14).